The following is a 275-amino-acid chain: Large ribosomal subunit protein uL2 (275 aa).

The interval Arg-221–Arg-275 is disordered. The segment covering Asp-229–Glu-241 has biased composition (basic and acidic residues).

The protein belongs to the universal ribosomal protein uL2 family. As to quaternary structure, part of the 50S ribosomal subunit. Forms a bridge to the 30S subunit in the 70S ribosome.

Its function is as follows. One of the primary rRNA binding proteins. Required for association of the 30S and 50S subunits to form the 70S ribosome, for tRNA binding and peptide bond formation. It has been suggested to have peptidyltransferase activity; this is somewhat controversial. Makes several contacts with the 16S rRNA in the 70S ribosome. This chain is Large ribosomal subunit protein uL2, found in Dechloromonas aromatica (strain RCB).